The chain runs to 362 residues: MHSFASLLAYGLVAGATFASASPIEARDSCTFTTAAAAKAGKAKCSTITLNNIEVPAGTTLDLTGLTSGTKVIFEGTTTFQYEEWAGPLISMSGEHITVTGASGHLINCDGARWWDGKGTSGKKKPKFFYAHGLDSSSITGLNIKNTPLMAFSVQANDITFTDVTINNADGDTQGGHNTDAFDVGNSVGVNIIKPWVHNQDDCLAVNSGENIWFTGGTCIGGHGLSIGSVGDRSNNVVKNVTIEHSTVSNSENAVRIKTISGATGSVSEITYSNIVMSGISDYGVVIQQDYEDGKPTGKPTNGVTIQDVKLESVTGSVDSGATEIYLLCGSGSCSDWTWDDVKVTGGKKSTACKNFPSVASC.

A signal peptide spans 1-21; it reads MHSFASLLAYGLVAGATFASA. The propeptide occupies 22–27; it reads SPIEAR. A disulfide bridge links cysteine 30 with cysteine 45. The stretch at 156–186 is one PbH1 1 repeat; it reads ANDITFTDVTINNADGDTQGGHNTDAFDVGN. Catalysis depends on aspartate 201, which acts as the Proton donor. The cysteines at positions 203 and 219 are disulfide-linked. PbH1 repeat units follow at residues 209–229, 238–259, 267–289, and 301–322; these read GENI…SIGS, VKNV…RIKT, VSEI…VIQQ, and TNGV…DSGA. The active site involves histidine 223. N-linked (GlcNAc...) (high mannose) asparagine glycosylation occurs at asparagine 240. 2 disulfides stabilise this stretch: cysteine 329-cysteine 334 and cysteine 353-cysteine 362.

This sequence belongs to the glycosyl hydrolase 28 family.

Its subcellular location is the secreted. It catalyses the reaction (1,4-alpha-D-galacturonosyl)n+m + H2O = (1,4-alpha-D-galacturonosyl)n + (1,4-alpha-D-galacturonosyl)m.. In terms of biological role, involved in maceration and soft-rotting of plant tissue. Hydrolyzes the 1,4-alpha glycosidic bonds of de-esterified pectate in the smooth region of the plant cell wall. This chain is Endopolygalacturonase II (pgaII), found in Aspergillus niger (strain ATCC 1015 / CBS 113.46 / FGSC A1144 / LSHB Ac4 / NCTC 3858a / NRRL 328 / USDA 3528.7).